A 496-amino-acid polypeptide reads, in one-letter code: Lysine--tRNA ligase (496 aa).

Mg(2+) is bound by residues E408 and E415.

It belongs to the class-II aminoacyl-tRNA synthetase family. As to quaternary structure, homodimer. Requires Mg(2+) as cofactor.

The protein localises to the cytoplasm. It carries out the reaction tRNA(Lys) + L-lysine + ATP = L-lysyl-tRNA(Lys) + AMP + diphosphate. The protein is Lysine--tRNA ligase of Legionella pneumophila (strain Corby).